We begin with the raw amino-acid sequence, 472 residues long: Glycogen synthase (472 aa).

Position 16 (Lys16) interacts with ADP-alpha-D-glucose.

The protein belongs to the glycosyltransferase 1 family. Bacterial/plant glycogen synthase subfamily.

The enzyme catalyses [(1-&gt;4)-alpha-D-glucosyl](n) + ADP-alpha-D-glucose = [(1-&gt;4)-alpha-D-glucosyl](n+1) + ADP + H(+). It functions in the pathway glycan biosynthesis; glycogen biosynthesis. Synthesizes alpha-1,4-glucan chains using ADP-glucose. The chain is Glycogen synthase from Jannaschia sp. (strain CCS1).